We begin with the raw amino-acid sequence, 254 residues long: Imidazole glycerol phosphate synthase subunit HisF (254 aa).

Residues Asp12 and Asp131 contribute to the active site.

The protein belongs to the HisA/HisF family. In terms of assembly, heterodimer of HisH and HisF.

The protein localises to the cytoplasm. It catalyses the reaction 5-[(5-phospho-1-deoxy-D-ribulos-1-ylimino)methylamino]-1-(5-phospho-beta-D-ribosyl)imidazole-4-carboxamide + L-glutamine = D-erythro-1-(imidazol-4-yl)glycerol 3-phosphate + 5-amino-1-(5-phospho-beta-D-ribosyl)imidazole-4-carboxamide + L-glutamate + H(+). It functions in the pathway amino-acid biosynthesis; L-histidine biosynthesis; L-histidine from 5-phospho-alpha-D-ribose 1-diphosphate: step 5/9. In terms of biological role, IGPS catalyzes the conversion of PRFAR and glutamine to IGP, AICAR and glutamate. The HisF subunit catalyzes the cyclization activity that produces IGP and AICAR from PRFAR using the ammonia provided by the HisH subunit. In Corynebacterium aurimucosum (strain ATCC 700975 / DSM 44827 / CIP 107346 / CN-1) (Corynebacterium nigricans), this protein is Imidazole glycerol phosphate synthase subunit HisF.